The sequence spans 400 residues: CinA-like protein (400 aa).

The protein belongs to the CinA family.

This Escherichia coli (strain 55989 / EAEC) protein is CinA-like protein.